The following is a 181-amino-acid chain: Isopentenyl-diphosphate Delta-isomerase (181 aa).

Residues H25 and H32 each coordinate Mn(2+). A Nudix hydrolase domain is found at 30-164; the sequence is LLHLAFSCWL…PWAFSPWMVL (135 aa). C67 is a catalytic residue. Residue H69 coordinates Mn(2+). A Mg(2+)-binding site is contributed by E87. Positions 114 and 116 each coordinate Mn(2+). E116 is an active-site residue.

It belongs to the IPP isomerase type 1 family. As to quaternary structure, homodimer. The cofactor is Mg(2+). Mn(2+) is required as a cofactor.

It is found in the cytoplasm. The catalysed reaction is isopentenyl diphosphate = dimethylallyl diphosphate. Its pathway is isoprenoid biosynthesis; dimethylallyl diphosphate biosynthesis; dimethylallyl diphosphate from isopentenyl diphosphate: step 1/1. Functionally, catalyzes the 1,3-allylic rearrangement of the homoallylic substrate isopentenyl (IPP) to its highly electrophilic allylic isomer, dimethylallyl diphosphate (DMAPP). The protein is Isopentenyl-diphosphate Delta-isomerase of Citrobacter koseri (strain ATCC BAA-895 / CDC 4225-83 / SGSC4696).